We begin with the raw amino-acid sequence, 238 residues long: Immunoglobulin superfamily member 6 (238 aa).

The N-terminal stretch at 1–27 (MGPVSTSRRGLRLGISLILLQVGVVGA) is a signal peptide. Over 28 to 153 (CTVSVLQPGY…RLFSREVHSL (126 aa)) the chain is Extracellular. An Ig-like C2-type domain is found at 30–134 (VSVLQPGYLE…EPVPTAKQTG (105 aa)). A disulfide bond links C51 and C118. Residues 154 to 174 (LIVLLALLAVYVTGVCVIFIV) form a helical membrane-spanning segment. Over 175 to 238 (LFRSKSNTPR…RKALPSPGRP (64 aa)) the chain is Cytoplasmic. The span at 215–230 (ETSHQPEQDGNYENRK) shows a compositional bias: basic and acidic residues. The interval 215-238 (ETSHQPEQDGNYENRKALPSPGRP) is disordered.

Its subcellular location is the membrane. This Rattus norvegicus (Rat) protein is Immunoglobulin superfamily member 6 (Igsf6).